A 235-amino-acid chain; its full sequence is Large ribosomal subunit protein uL1 (235 aa).

Belongs to the universal ribosomal protein uL1 family. In terms of assembly, part of the 50S ribosomal subunit.

Binds directly to 23S rRNA. The L1 stalk is quite mobile in the ribosome, and is involved in E site tRNA release. In terms of biological role, protein L1 is also a translational repressor protein, it controls the translation of the L11 operon by binding to its mRNA. The sequence is that of Large ribosomal subunit protein uL1 from Synechococcus sp. (strain CC9902).